Here is a 345-residue protein sequence, read N- to C-terminus: NADPH dehydrogenase (345 aa).

23–26 (SPMC) is an FMN binding site. Tyrosine 28 is a substrate binding site. Positions 60 and 102 each coordinate FMN. 164 to 167 (HGAH) is a substrate binding site. FMN-binding positions include arginine 215 and 307–308 (GR).

This sequence belongs to the NADH:flavin oxidoreductase/NADH oxidase family. NamA subfamily. In terms of assembly, homotetramer. FMN is required as a cofactor.

The enzyme catalyses A + NADPH + H(+) = AH2 + NADP(+). Its function is as follows. Catalyzes the reduction of the double bond of an array of alpha,beta-unsaturated aldehydes and ketones. It also reduces the nitro group of nitroester and nitroaromatic compounds. It could have a role in detoxification processes. The polypeptide is NADPH dehydrogenase (Bacillus cereus (strain G9842)).